The primary structure comprises 130 residues: Small ribosomal subunit protein uS9 (130 aa).

It belongs to the universal ribosomal protein uS9 family.

The chain is Small ribosomal subunit protein uS9 from Aeromonas salmonicida (strain A449).